A 382-amino-acid chain; its full sequence is Mannitol-1-phosphate 5-dehydrogenase (382 aa).

3–14 (AVHFGAGNIGRG) contributes to the NAD(+) binding site.

The protein belongs to the mannitol dehydrogenase family.

The catalysed reaction is D-mannitol 1-phosphate + NAD(+) = beta-D-fructose 6-phosphate + NADH + H(+). The polypeptide is Mannitol-1-phosphate 5-dehydrogenase (Exiguobacterium sp. (strain ATCC BAA-1283 / AT1b)).